The following is a 1360-amino-acid chain: DNA-directed RNA polymerase subunit beta (1360 aa).

The protein belongs to the RNA polymerase beta chain family. The RNAP catalytic core consists of 2 alpha, 1 beta, 1 beta' and 1 omega subunit. When a sigma factor is associated with the core the holoenzyme is formed, which can initiate transcription.

It carries out the reaction RNA(n) + a ribonucleoside 5'-triphosphate = RNA(n+1) + diphosphate. Functionally, DNA-dependent RNA polymerase catalyzes the transcription of DNA into RNA using the four ribonucleoside triphosphates as substrates. The sequence is that of DNA-directed RNA polymerase subunit beta from Caulobacter sp. (strain K31).